A 120-amino-acid chain; its full sequence is Large ribosomal subunit protein bL20 (120 aa).

It belongs to the bacterial ribosomal protein bL20 family.

Its function is as follows. Binds directly to 23S ribosomal RNA and is necessary for the in vitro assembly process of the 50S ribosomal subunit. It is not involved in the protein synthesizing functions of that subunit. This is Large ribosomal subunit protein bL20 from Xanthobacter autotrophicus (strain ATCC BAA-1158 / Py2).